Here is a 250-residue protein sequence, read N- to C-terminus: Probable aquaporin TIP2-2 (250 aa).

Position 1 is an N-acetylmethionine (M1). At 1–24 (MVKIEIGSVGDSFSVASLKAYLSE) the chain is on the cytoplasmic side. K3 carries the N6,N6-dimethyllysine modification. Residues 25–45 (FIATLLFVFAGVGSALAFAKL) form a helical membrane-spanning segment. Over 46-53 (TSDAALDP) the chain is Vacuolar. The helical transmembrane segment at 54-74 (AGLVAVAVAHAFALFVGVSIA) threads the bilayer. Residues 75 to 101 (ANISGGHLNPAVTLGLAVGGNITVITG) lie on the Cytoplasmic side of the membrane. An NPA 1 motif is present at residues 83–85 (NPA). The chain crosses the membrane as a helical span at residues 102–122 (FFYWIAQCLGSIVACLLLVFV). The Vacuolar segment spans residues 123-133 (TNGESVPTHGV). Residues 134–154 (AAGLGAIEGVVMEIVVTFALV) form a helical membrane-spanning segment. At 155 to 168 (YTVYATAADPKKGS) the chain is on the cytoplasmic side. The helical transmembrane segment at 169 to 189 (LGTIAPIAIGFIVGANILAAG) threads the bilayer. At 190–210 (PFSGGSMNPARSFGPAVVSGD) the chain is on the vacuolar side. The NPA 2 motif lies at 197–199 (NPA). A helical membrane pass occupies residues 211–231 (FSQIWIYWVGPLVGGALAGLI). The Cytoplasmic portion of the chain corresponds to 232-250 (YGDVFIGSYAPAPTTESYP). S248 bears the Phosphoserine mark.

The protein belongs to the MIP/aquaporin (TC 1.A.8) family. TIP (TC 1.A.8.10) subfamily. In terms of assembly, interacts with cucumber mosaic virus (CMV) Protein 1a. As to expression, expressed above groung and in roots.

It localises to the vacuole membrane. In terms of biological role, aquaporins facilitate the transport of water and small neutral solutes across cell membranes. This Arabidopsis thaliana (Mouse-ear cress) protein is Probable aquaporin TIP2-2 (TIP2-2).